The chain runs to 427 residues: DEAD-box ATP-dependent RNA helicase 56 (427 aa).

Positions 1-30 (MGDARDNEAYEEELLDYEEEDEKVPDSGNK) are disordered. A compositionally biased stretch (acidic residues) spans 9-23 (AYEEELLDYEEEDEK). Residues 46–74 (SGFRDFLLKPELLRAIVDSGFEHPSEVQH) carry the Q motif motif. The region spanning 77–250 (IPQAILGMDV…KKFMQDPMEI (174 aa)) is the Helicase ATP-binding domain. Residue 90–97 (AKSGMGKT) coordinates ATP. Residues 197–200 (DECD) carry the DECD box motif. One can recognise a Helicase C-terminal domain in the interval 278 to 423 (KLNDLLDALD…ELPEQIDTST (146 aa)).

This sequence belongs to the DEAD box helicase family. DECD subfamily. In terms of assembly, interacts with ALY2 and MOS11.

The protein resides in the nucleus. It catalyses the reaction ATP + H2O = ADP + phosphate + H(+). Functionally, ATP-dependent RNA helicase involved in pre-mRNA splicing. Required for the export of mRNA out of the nucleus. In addition to ssRNA and dsRNA, binds dsDNA, but not ssDNA. The sequence is that of DEAD-box ATP-dependent RNA helicase 56 (RH56) from Arabidopsis thaliana (Mouse-ear cress).